We begin with the raw amino-acid sequence, 607 residues long: MSSGLRAADFPRWKRHISEQLRRRDRLQRQAFEEIILQYNKLLEKSDLHSVLAQKLQAEKHDVPNRHEISPGHDGTWNDNQLQEMAQLRIKHQEELTELHKKRGELAQLVIDLNNQMQRKDREMQMNEAKIAECLQTISDLETECLDLRTKLCDLERANQTLKDEYDALQITFTALEGKLRKTTEENQELVTRWMAEKAQEANRLNAENEKDSRRRQARLQKELAEAAKEPLPVEQDDDIEVIVDETSDHTEETSPVRAISRAATKRLSQPAGGLLDSITNIFGRRSVSSFPVPQDNVDTHPGSGKEVRVPATALCVFDAHDGEVNAVQFSPGSRLLATGGMDRRVKLWEVFGEKCEFKGSLSGSNAGITSIEFDSAGSYLLAASNDFASRIWTVDDYRLRHTLTGHSGKVLSAKFLLDNARIVSGSHDRTLKLWDLRSKVCIKTVFAGSSCNDIVCTEQCVMSGHFDKKIRFWDIRSESIVREMELLGKITALDLNPERTELLSCSRDDLLKVIDLRTNAIKQTFSAPGFKCGSDWTRVVFSPDGSYVAAGSAEGSLYIWSVLTGKVEKVLSKQHSSSINAVAWSPSGSHVVSVDKGCKAVLWAQY.

Positions 13 to 43 are interaction with ATG5; that stretch reads WKRHISEQLRRRDRLQRQAFEEIILQYNKLL. Positions 78–230 form a coiled coil; the sequence is NDNQLQEMAQ…QKELAEAAKE (153 aa). Serine 139 carries the post-translational modification Phosphoserine; by CK2. Positions 207-230 are WIPI2-binding; the sequence is AENEKDSRRRQARLQKELAEAAKE. Residues 230 to 242 are RB1CC1-binding; sequence EPLPVEQDDDIEV. Serine 269 and serine 287 each carry phosphoserine. A Caspase cleavage motif is present at residues 296–299; the sequence is DNVD. 7 WD repeats span residues 320 to 359, 364 to 403, 406 to 445, 447 to 484, 486 to 525, 532 to 573, and 575 to 607; these read AHDGEVNAVQFSPGSRLLATGGMDRRVKLWEVFGEKCEFK, GSNAGITSIEFDSAGSYLLAASNDFASRIWTVDDYRLRHT, GHSGKVLSAKFLLDNARIVSGSHDRTLKLWDLRSKVCIKT, FAGSSCNDIVCTEQCVMSGHFDKKIRFWDIRSESIVRE, ELLGKITALDLNPERTELLSCSRDDLLKVIDLRTNAIKQT, KCGS…KVLS, and QHSSSINAVAWSPSGSHVVSVDKGCKAVLWAQY.

The protein belongs to the WD repeat ATG16 family. As to quaternary structure, homodimer. Homooligomer. Heterooligomer with ATG16L2. Interacts with WIPI1. Interacts with WIPI2. Interacts with RB1CC1; the interaction is required for ULK1 complex-dependent autophagy. Interacts with ATG5. Part of the minor complex composed of 4 sets of ATG12-ATG5 and ATG16L1 (400 kDa); this complex interacts with ATG3 leading to disruption of ATG7 interaction and promotion of ATG8-like proteins lipidation. Part of the major complex composed of 8 sets of ATG12-ATG5 and ATG16L1 (800 kDa). Interacts with RAB33B (GTP- and GDP-bound forms); the complex consists of a tetramer where two RAB33B molecules bind independently one molecule of the ATG16L1 homodimer; the interaction promotes ATG12-ATG5-ATG16L1 complex recruitment to phagophores. Interacts (via WD repeats) with TMEM59; the interaction mediates unconventional autophagic activity of TMEM59. Interacts with TLR2. Interacts (via WD repeats) with MEFV. Interacts with PPP1CA; the interaction dephosphorylates ATG16L1 causing dissociation of ATG12-ATG5-ATG16L1 complex. Interacts (via N-terminal) with CLTC. Interacts with NOD1. Interacts with NOD2. Interacts with TUFM. Interacts with TRIM16. Interacts (via WD repeats) with SPATA33. Interacts with IRGM. Proteolytic cleavage by activated CASP3 leads to degradation and may regulate autophagy upon cellular stress and apoptotic stimuli. In terms of processing, phosphorylation at Ser-139 promotes association with the ATG12-ATG5 conjugate to form the ATG12-ATG5-ATG16L1 complex.

The protein resides in the cytoplasm. It is found in the preautophagosomal structure membrane. It localises to the endosome membrane. Its subcellular location is the lysosome membrane. Plays an essential role in both canonical and non-canonical autophagy: interacts with ATG12-ATG5 to mediate the lipidation to ATG8 family proteins (MAP1LC3A, MAP1LC3B, MAP1LC3C, GABARAPL1, GABARAPL2 and GABARAP). Acts as a molecular hub, coordinating autophagy pathways via distinct domains that support either canonical or non-canonical signaling. During canonical autophagy, interacts with ATG12-ATG5 to mediate the conjugation of phosphatidylethanolamine (PE) to ATG8 proteins, to produce a membrane-bound activated form of ATG8. Thereby, controls the elongation of the nascent autophagosomal membrane. As part of the ATG8 conjugation system with ATG5 and ATG12, required for recruitment of LRRK2 to stressed lysosomes and induction of LRRK2 kinase activity in response to lysosomal stress. Also involved in non-canonical autophagy, a parallel pathway involving conjugation of ATG8 proteins to single membranes at endolysosomal compartments, probably by catalyzing conjugation of phosphatidylserine (PS) to ATG8. Non-canonical autophagy plays a key role in epithelial cells to limit lethal infection by influenza A (IAV) virus. Regulates mitochondrial antiviral signaling (MAVS)-dependent type I interferon (IFN-I) production. Negatively regulates NOD1- and NOD2-driven inflammatory cytokine response. Instead, promotes an autophagy-dependent antibacterial pathway together with NOD1 or NOD2. Plays a role in regulating morphology and function of Paneth cell. This is Autophagy-related protein 16-1 from Homo sapiens (Human).